A 1158-amino-acid chain; its full sequence is ATP-dependent helicase/deoxyribonuclease subunit B (1158 aa).

8-15 (GRAGTGKS) contributes to the ATP binding site. [4Fe-4S] cluster-binding residues include C791, C1112, C1115, and C1121.

The protein belongs to the helicase family. AddB/RexB type 1 subfamily. Heterodimer of AddA and AddB. Mg(2+) is required as a cofactor. [4Fe-4S] cluster serves as cofactor.

Its function is as follows. The heterodimer acts as both an ATP-dependent DNA helicase and an ATP-dependent, dual-direction single-stranded exonuclease. Recognizes the chi site generating a DNA molecule suitable for the initiation of homologous recombination. The AddB subunit has 5' -&gt; 3' nuclease activity but not helicase activity. The polypeptide is ATP-dependent helicase/deoxyribonuclease subunit B (Clostridium perfringens (strain SM101 / Type A)).